The following is a 297-amino-acid chain: tRNA dimethylallyltransferase (297 aa).

10-17 (GITASGKS) lines the ATP pocket. 12–17 (TASGKS) serves as a coordination point for substrate. Residues 36–39 (DSKQ) are interaction with substrate tRNA.

The protein belongs to the IPP transferase family. In terms of assembly, monomer. It depends on Mg(2+) as a cofactor.

The enzyme catalyses adenosine(37) in tRNA + dimethylallyl diphosphate = N(6)-dimethylallyladenosine(37) in tRNA + diphosphate. Its function is as follows. Catalyzes the transfer of a dimethylallyl group onto the adenine at position 37 in tRNAs that read codons beginning with uridine, leading to the formation of N6-(dimethylallyl)adenosine (i(6)A). In Wolbachia sp. subsp. Brugia malayi (strain TRS), this protein is tRNA dimethylallyltransferase.